The chain runs to 921 residues: Probable serine/threonine-protein kinase DDB_G0275165 (921 aa).

The region spanning 23–277 (FDPLSIIGSG…SNILGLLEYI (255 aa)) is the Protein kinase domain. ATP is bound by residues 29 to 37 (IGSGGFGKV) and Lys50. The Proton acceptor role is filled by Asp147. 8 disordered regions span residues 289-453 (DYEP…SFPR), 465-492 (RGEE…NEED), 530-571 (RPWN…SDSN), 583-653 (NPTP…PTTI), 671-698 (STAT…SNNN), 737-813 (IQPL…SRSL), 833-858 (SSQQ…TSQF), and 877-921 (FEKS…KPKK). Composition is skewed to low complexity over residues 310–352 (NNNN…NNNN), 400–412 (SNIN…NNSN), and 429–445 (NING…NNNN). Composition is skewed to low complexity over residues 539-550 (NNNNKNNNNNEK) and 583-638 (NPTP…SLSS). Positions 643–653 (PQSTYKVPTTI) are enriched in polar residues. Low complexity-rich tracts occupy residues 748–775 (TVAA…PTST), 842–857 (QPSS…PTSQ), and 892–910 (TSSS…PSSP).

The protein belongs to the protein kinase superfamily. TKL Ser/Thr protein kinase family.

It catalyses the reaction L-seryl-[protein] + ATP = O-phospho-L-seryl-[protein] + ADP + H(+). The enzyme catalyses L-threonyl-[protein] + ATP = O-phospho-L-threonyl-[protein] + ADP + H(+). In Dictyostelium discoideum (Social amoeba), this protein is Probable serine/threonine-protein kinase DDB_G0275165.